Consider the following 528-residue polypeptide: Negative elongation factor A (528 aa).

One can recognise an HDAg domain in the interval 89-248; the sequence is WVLMVADILK…TPIPPSRTLL (160 aa). The interval 125 to 188 is NELF-C/D-binding; it reads REKVGECEAS…LQKSTETAQQ (64 aa). A Phosphothreonine modification is found at Thr157. The RNAPII-binding stretch occupies residues 189 to 248; sequence LKRSAGVPFHAKGRGLLRKMDTTTPLKGIPKQAPFRSPTAPSVFSPTGNRTPIPPSRTLL. Residues 215-245 are disordered; the sequence is KGIPKQAPFRSPTAPSVFSPTGNRTPIPPSR. Ser225 and Ser233 each carry phosphoserine. Positions 227 to 238 are enriched in polar residues; it reads TAPSVFSPTGNR. Position 277 is a phosphothreonine (Thr277). The span at 320–341 shows a compositional bias: low complexity; it reads PSTSYLPSTPSVVPASSYIPSS. The interval 320–409 is disordered; it reads PSTSYLPSTP…PPAVAPTTQT (90 aa). Ser363 carries the phosphoserine modification.

This sequence belongs to the NELF-A family. As to quaternary structure, the NELF complex is composed of NELFA, NELFB, NELFCD (isoform NELF-C or isoform NELF-D) and NELFE; NELFA and NELFCD form a stable subcomplex that binds to the N-terminus of NELFB. In vitro, the NELFA:NELFCD subcomplex binds to ssDNA and ssRNA in a sequence- and structure-dependent manner. Interacts with the RNA polymerase II complex when it is not phosphorylated by P-TEFb. In terms of tissue distribution, ubiquitous. Expressed in heart, brain, placenta, liver, skeletal muscle, kidney and pancreas. Expressed at lower level in adult lung. Expressed in fetal brain, lung, liver and kidney.

It is found in the nucleus. In terms of biological role, essential component of the NELF complex, a complex that negatively regulates the elongation of transcription by RNA polymerase II. The NELF complex, which acts via an association with the DSIF complex and causes transcriptional pausing, is counteracted by the P-TEFb kinase complex. Functionally, (Microbial infection) The NELF complex is involved in HIV-1 latency possibly involving recruitment of PCF11 to paused RNA polymerase II. In Homo sapiens (Human), this protein is Negative elongation factor A (NELFA).